A 361-amino-acid chain; its full sequence is Phospho-N-acetylmuramoyl-pentapeptide-transferase (361 aa).

Transmembrane regions (helical) follow at residues 18 to 38 (VFNYLTFRSIVSALTALILVL), 73 to 93 (TMGGVLIIVAIVISVLLWGDL), 97 to 117 (FIWVILLVTVAFSAIGWMDDY), 135 to 155 (LLQSIIGALAAVYLYFSATTG), 168 to 188 (VLPNLGLFYIVLAYFVIVGSS), 196 to 216 (GLDGLALMPTVMIGAALGVFA), 235 to 255 (GAGEVVVFCSALVGAGLGFLW), 263 to 283 (VFMGDVGSLGLGAALGVTAVV), 288 to 308 (LVYFLMGGIFVAETLSVILQV), and 338 to 358 (KVIVRFWIITFILVLCGLATL).

The protein belongs to the glycosyltransferase 4 family. MraY subfamily. Mg(2+) is required as a cofactor.

It is found in the cell inner membrane. The enzyme catalyses UDP-N-acetyl-alpha-D-muramoyl-L-alanyl-gamma-D-glutamyl-meso-2,6-diaminopimeloyl-D-alanyl-D-alanine + di-trans,octa-cis-undecaprenyl phosphate = di-trans,octa-cis-undecaprenyl diphospho-N-acetyl-alpha-D-muramoyl-L-alanyl-D-glutamyl-meso-2,6-diaminopimeloyl-D-alanyl-D-alanine + UMP. It functions in the pathway cell wall biogenesis; peptidoglycan biosynthesis. Functionally, catalyzes the initial step of the lipid cycle reactions in the biosynthesis of the cell wall peptidoglycan: transfers peptidoglycan precursor phospho-MurNAc-pentapeptide from UDP-MurNAc-pentapeptide onto the lipid carrier undecaprenyl phosphate, yielding undecaprenyl-pyrophosphoryl-MurNAc-pentapeptide, known as lipid I. The polypeptide is Phospho-N-acetylmuramoyl-pentapeptide-transferase (Coxiella burnetii (strain CbuK_Q154) (Coxiella burnetii (strain Q154))).